The following is a 150-amino-acid chain: Multiprotein-bridging factor 1 (150 aa).

The tract at residues 36-71 (SSESKGAGQSKGPADHQRIAKLDRDDAPKPPEKVSA) is disordered. Residues 48–70 (PADHQRIAKLDRDDAPKPPEKVS) are compositionally biased toward basic and acidic residues. Residues 84–137 (IKNAEGKSMTQKELATSVNAKPQDIADLESGRAVPDQALLGKLERKLNVKLRGA) enclose the HTH cro/C1-type domain. Positions 94 to 113 (QKELATSVNAKPQDIADLES) form a DNA-binding region, H-T-H motif.

The protein belongs to the MBF1 family.

Functionally, transcriptional coactivator that stimulates GCN4-dependent transcriptional activity by bridging the DNA-binding region of GCN4 and TBP (SPT15), thereby recruiting TBP to GCN4-bound promoters. Involved in induction of the ribosome quality control (RQC) pathway; a pathway that degrades nascent peptide chains during problematic translation. Required to prevent stalled ribosomes from frameshifting. The protein is Multiprotein-bridging factor 1 (MBF1) of Cryptococcus neoformans var. neoformans serotype D (strain B-3501A) (Filobasidiella neoformans).